Here is a 175-residue protein sequence, read N- to C-terminus: Heme-dependent oxidative N-demethylase delta subunit (175 aa).

The heme-dependent oxidative N-demethylase (HODM) is a heterotetramer composed of a catalytic alpha subunit, a FMN/2Fe-2S-dependent oxidoreductase beta subunit, a gamma subunit with putative aminotransferase activity, and a delta subunit of unknown function.

In terms of biological role, component of the heme-dependent oxidative N-demethylase (HODM) enzyme, that catalyzes the NADPH-dependent oxidation of dimethylamine (DMA) to methylamine (MA) and formaldehyde. Functions in bacterial methylated amine catabolism, linking alkylamine oxidation to the tetrahydrofolate C1 pool. The function of the delta subunit is unknown. The sequence is that of Heme-dependent oxidative N-demethylase delta subunit from Ectopseudomonas mendocina (strain ymp) (Pseudomonas mendocina).